The sequence spans 96 residues: Putative pterin-4-alpha-carbinolamine dehydratase (96 aa).

Belongs to the pterin-4-alpha-carbinolamine dehydratase family.

It carries out the reaction (4aS,6R)-4a-hydroxy-L-erythro-5,6,7,8-tetrahydrobiopterin = (6R)-L-erythro-6,7-dihydrobiopterin + H2O. In Synechocystis sp. (strain ATCC 27184 / PCC 6803 / Kazusa), this protein is Putative pterin-4-alpha-carbinolamine dehydratase.